A 343-amino-acid polypeptide reads, in one-letter code: uncharacterized protein (343 aa).

2 disordered regions span residues 1–27 (MIRE…ERMT) and 205–247 (SGGL…SKRQ). Residues 16–27 (RARDSRAQERMT) are compositionally biased toward basic and acidic residues. A compositionally biased stretch (acidic residues) spans 219 to 228 (GQDDGNTDDG). Residues 229 to 247 (NDVHQKGRGEVESKTSKRQ) are compositionally biased toward basic and acidic residues.

Dispensable for normal development and fertility. This is an uncharacterized protein from Bos taurus (Bovine).